A 183-amino-acid polypeptide reads, in one-letter code: NAD(P)H-quinone oxidoreductase subunit J (183 aa).

The disordered stretch occupies residues 1–21 (MAEENAQEKQAPPSAGEQSEP).

Belongs to the complex I 30 kDa subunit family. In terms of assembly, NDH-1 can be composed of about 15 different subunits; different subcomplexes with different compositions have been identified which probably have different functions.

The protein resides in the cellular thylakoid membrane. It carries out the reaction a plastoquinone + NADH + (n+1) H(+)(in) = a plastoquinol + NAD(+) + n H(+)(out). The catalysed reaction is a plastoquinone + NADPH + (n+1) H(+)(in) = a plastoquinol + NADP(+) + n H(+)(out). In terms of biological role, NDH-1 shuttles electrons from an unknown electron donor, via FMN and iron-sulfur (Fe-S) centers, to quinones in the respiratory and/or the photosynthetic chain. The immediate electron acceptor for the enzyme in this species is believed to be plastoquinone. Couples the redox reaction to proton translocation, and thus conserves the redox energy in a proton gradient. Cyanobacterial NDH-1 also plays a role in inorganic carbon-concentration. This is NAD(P)H-quinone oxidoreductase subunit J from Synechococcus sp. (strain JA-2-3B'a(2-13)) (Cyanobacteria bacterium Yellowstone B-Prime).